The following is a 367-amino-acid chain: Histidinol-phosphate aminotransferase (367 aa).

Lys-221 carries the N6-(pyridoxal phosphate)lysine modification.

This sequence belongs to the class-II pyridoxal-phosphate-dependent aminotransferase family. Histidinol-phosphate aminotransferase subfamily. In terms of assembly, homodimer. Pyridoxal 5'-phosphate serves as cofactor.

It catalyses the reaction L-histidinol phosphate + 2-oxoglutarate = 3-(imidazol-4-yl)-2-oxopropyl phosphate + L-glutamate. It participates in amino-acid biosynthesis; L-histidine biosynthesis; L-histidine from 5-phospho-alpha-D-ribose 1-diphosphate: step 7/9. This Paracoccus denitrificans (strain Pd 1222) protein is Histidinol-phosphate aminotransferase.